A 109-amino-acid polypeptide reads, in one-letter code: Somatostatin-2 (109 aa).

The first 16 residues, 1–16 (MQFLASLVSFLLVVWS), serve as a signal peptide directing secretion. The propeptide occupies 17–80 (VKATALPVED…EPLENKLEER (64 aa)). Cys98 and Cys109 are oxidised to a cystine.

This sequence belongs to the somatostatin family.

Its subcellular location is the secreted. In terms of biological role, somatostatin inhibits the release of somatotropin. This Protopterus annectens (African lungfish) protein is Somatostatin-2 (sst2).